We begin with the raw amino-acid sequence, 117 residues long: Venom nerve growth factor (117 aa).

Disulfide bonds link cysteine 12–cysteine 77, cysteine 55–cysteine 105, and cysteine 65–cysteine 107. N-linked (GlcNAc...) asparagine glycosylation occurs at asparagine 21.

The protein belongs to the NGF-beta family. Homodimer; non-covalently linked. As to expression, expressed by the venom gland.

It localises to the secreted. Its function is as follows. Nerve growth factor is important for the development and maintenance of the sympathetic and sensory nervous systems. It stimulates division and differentiation of sympathetic and embryonic sensory neurons as well as basal forebrain cholinergic neurons in the brain. Its relevance in the snake venom is not clear. However, it has been shown to inhibit metalloproteinase-dependent proteolysis of platelet glycoprotein Ib alpha, suggesting a metalloproteinase inhibition to prevent metalloprotease autodigestion and/or protection against prey proteases. Binds a lipid between the two protein chains in the homodimer. The lipid-bound form promotes histamine relase from mouse mast cells, contrary to the lipid-free form. The chain is Venom nerve growth factor from Daboia russelii (Russel's viper).